A 22-amino-acid polypeptide reads, in one-letter code: Unknown protein from spot 168 of 2D-PAGE of etiolated coleoptile (22 aa).

This is Unknown protein from spot 168 of 2D-PAGE of etiolated coleoptile from Zea mays (Maize).